The primary structure comprises 188 residues: Methylated-DNA--protein-cysteine methyltransferase (188 aa).

Residues tyrosine 120, glycine 121, and arginine 134 each coordinate DNA. Cysteine 151 serves as the catalytic Nucleophile; methyl group acceptor. Residue serine 157 coordinates DNA.

The protein belongs to the MGMT family.

The protein localises to the nucleus. The enzyme catalyses a 6-O-methyl-2'-deoxyguanosine in DNA + L-cysteinyl-[protein] = S-methyl-L-cysteinyl-[protein] + a 2'-deoxyguanosine in DNA. It catalyses the reaction a 4-O-methyl-thymidine in DNA + L-cysteinyl-[protein] = a thymidine in DNA + S-methyl-L-cysteinyl-[protein]. Its function is as follows. Involved in the cellular defense against the biological effects of O6-methylguanine (O6-MeG) and O4-methylthymine (O4-MeT) in DNA. Repairs the methylated nucleobase in DNA by stoichiometrically transferring the methyl group to a cysteine residue in the enzyme. This is a suicide reaction: the enzyme is irreversibly inactivated. Prefers double-stranded DNA over single-stranded DNA as substrate. The sequence is that of Methylated-DNA--protein-cysteine methyltransferase (MGT1) from Saccharomyces cerevisiae (strain ATCC 204508 / S288c) (Baker's yeast).